Here is a 379-residue protein sequence, read N- to C-terminus: MNALHFGAGNIGRGFIGKLLADSGVFVTFADINQTQIDQINQNKQYGVKIVGDASRVEVVKNIAAINSKDEEAVIEQVKSVELITTAVGPNVLGFIAPLFAKALAARLEAGNTQPLNIIACENMVRGTSFFKAKIFENLTASQQAEIEKFVGFVDSAVDRIVPPAELNEADPLEVTVEEFSEWIVDKTQFKGQIPDIKGMELTDNLMAFVERKLFTLNTGHLISAYLGKQAGVKWIKEAIAIDSVKAAVKATMEESGAVLIKRYNFDPQAHAAYIEKILKRFANPYLNDDVNRVGREPIRKLSPNDRLIKPLLGTLEYGLPHKNLVNGVVMALQYRNEEDPQAVELAQFIADNGVAAAVEKYTGLTNQEVIDQVVALYN.

3–14 serves as a coordination point for NAD(+); the sequence is ALHFGAGNIGRG.

This sequence belongs to the mannitol dehydrogenase family.

The enzyme catalyses D-mannitol 1-phosphate + NAD(+) = beta-D-fructose 6-phosphate + NADH + H(+). This Actinobacillus pleuropneumoniae serotype 3 (strain JL03) protein is Mannitol-1-phosphate 5-dehydrogenase.